A 264-amino-acid chain; its full sequence is Leukocyte receptor cluster member 1 (264 aa).

Disordered stretches follow at residues 1–37 and 49–76; these read MNIL…RERR and FLRK…SGPV. The span at 12-37 shows a compositional bias: basic and acidic residues; the sequence is RNKDNVARVRRDEAQAREEEKERERR. Residues 16–46 adopt a coiled-coil conformation; sequence NVARVRRDEAQAREEEKERERRVLLAQQEAR. Ser59 is modified (phosphoserine). Positions 59-75 are enriched in low complexity; it reads SLPELEAAEAGAPGSGP. The stretch at 89–115 forms a coiled coil; it reads VIRGNKEYKEEKRQEKERQEKALGILT. The disordered stretch occupies residues 118–264; the sequence is GQSAAEAQTQ…PRQQDPHLTH (147 aa). Composition is skewed to basic and acidic residues over residues 146–162 and 170–214; these read PDEK…EMQK and HGGD…RSRA. Residues 196 to 222 adopt a coiled-coil conformation; it reads LDQLRAERLRREAAERSRAEALLARVQ. Position 245 is a phosphoserine (Ser245).

This is Leukocyte receptor cluster member 1 (LENG1) from Homo sapiens (Human).